A 29-amino-acid chain; its full sequence is NADP phosphatase 1 (29 aa).

Homodimer.

The protein resides in the cytoplasm. The sequence is that of NADP phosphatase 1 from Arthrobacter sp. (strain KM).